An 86-amino-acid polypeptide reads, in one-letter code: Small ribosomal subunit protein bS18 (86 aa).

The protein belongs to the bacterial ribosomal protein bS18 family. As to quaternary structure, part of the 30S ribosomal subunit. Forms a tight heterodimer with protein bS6.

Its function is as follows. Binds as a heterodimer with protein bS6 to the central domain of the 16S rRNA, where it helps stabilize the platform of the 30S subunit. The polypeptide is Small ribosomal subunit protein bS18 (Herpetosiphon aurantiacus (strain ATCC 23779 / DSM 785 / 114-95)).